A 140-amino-acid polypeptide reads, in one-letter code: uncharacterized protein (140 aa).

An N-terminal signal peptide occupies residues 1–22; it reads MRLRWQTIVLLLLILGGASASA.

This is an uncharacterized protein from Archaeoglobus fulgidus (strain ATCC 49558 / DSM 4304 / JCM 9628 / NBRC 100126 / VC-16).